The sequence spans 176 residues: Large ribosomal subunit protein uL6 (176 aa).

It belongs to the universal ribosomal protein uL6 family. In terms of assembly, part of the 50S ribosomal subunit.

In terms of biological role, this protein binds to the 23S rRNA, and is important in its secondary structure. It is located near the subunit interface in the base of the L7/L12 stalk, and near the tRNA binding site of the peptidyltransferase center. The protein is Large ribosomal subunit protein uL6 of Shewanella sediminis (strain HAW-EB3).